The chain runs to 406 residues: MEKIKKQNNIGSYSSDKDGEYKKFRFSKTSIRGFLLKEYEREVPIIVKIQSYRNKFLDFYFKMASILGEEVFFILALPISTWCVATQLGVELCVVLALTIGGGNILKNTFTLPRPPPNIVWTNTAHQKDHGLPSTHTASAFGLTFYFLIYTYFLFPTIGESFNISLLSMFFIVLFWSTSVMFSRLYNGHHTPMDVIAGLIVAITSILATTYQLRYFIEGMVLSETFLFGPMLYIAILSAILFFHPQANTGPTPAYPETGLVCGASLGSLISLWLHAQHPCPLMNQELLLLEANYDSIVSTIHSIPLLLHGSRILIGLVLVGIAKVFSKKFFFFAYDLVIRANTNNEQSQPITTVSFDPNKKIIVTPTIEAFSKLFVYTCVSFTIVSMPYLFYYLNIQTSADVTRYY.

2 helical membrane passes run 66 to 86 (ILGE…CVAT) and 92 to 112 (LCVV…TFTL). The tract at residues 107–115 (KNTFTLPRP) is phosphatase sequence motif I. The phosphatase sequence motif II stretch occupies residues 133–136 (PSTH). The active-site Proton donor is the His136. A run of 2 helical transmembrane segments spans residues 138–158 (ASAF…FPTI) and 162–182 (FNIS…SVMF). The segment at 183 to 194 (SRLYNGHHTPMD) is phosphatase sequence motif III. His190 (nucleophile) is an active-site residue. 5 consecutive transmembrane segments (helical) span residues 193–213 (MDVI…TYQL), 225–245 (TFLF…FFHP), 254–274 (AYPE…SLWL), 313–333 (ILIG…FFFF), and 374–394 (LFVY…FYYL).

It belongs to the type 2 lipid phosphate phosphatase family.

It is found in the endoplasmic reticulum membrane. In terms of biological role, has enzymatic activity against both sphingosine 1 phosphate (S1P) and dihydro-S1P. Regulates intracellular and extracellular S1P levels. In Dictyostelium discoideum (Social amoeba), this protein is Probable sphingosine-1-phosphate phosphatase (sppA).